A 130-amino-acid polypeptide reads, in one-letter code: Small ribosomal subunit protein uS9 (130 aa).

This sequence belongs to the universal ribosomal protein uS9 family.

This Geobacillus stearothermophilus (Bacillus stearothermophilus) protein is Small ribosomal subunit protein uS9 (rpsI).